Reading from the N-terminus, the 454-residue chain is Asparagine--tRNA ligase (454 aa).

Belongs to the class-II aminoacyl-tRNA synthetase family. As to quaternary structure, homodimer.

Its subcellular location is the cytoplasm. The enzyme catalyses tRNA(Asn) + L-asparagine + ATP = L-asparaginyl-tRNA(Asn) + AMP + diphosphate + H(+). The chain is Asparagine--tRNA ligase from Ureaplasma parvum serovar 3 (strain ATCC 27815 / 27 / NCTC 11736).